The sequence spans 102 residues: MQKARIKLASTNIKALNEVTDQIKQIAERTGVRMSGPIPLPTKRIRITTRKSPDGEGSATFDRFELRVHKRLVDIEADERAMRQIMRIRVPEDVTIEIELIS.

Belongs to the universal ribosomal protein uS10 family. As to quaternary structure, part of the 30S ribosomal subunit.

Involved in the binding of tRNA to the ribosomes. This chain is Small ribosomal subunit protein uS10, found in Thermococcus kodakarensis (strain ATCC BAA-918 / JCM 12380 / KOD1) (Pyrococcus kodakaraensis (strain KOD1)).